Reading from the N-terminus, the 326-residue chain is Biotin synthase (326 aa).

In terms of domain architecture, Radical SAM core spans 48–277 (FGAGKVDLCS…SARIRMAGGR (230 aa)). [4Fe-4S] cluster contacts are provided by Cys-66, Cys-70, and Cys-73. [2Fe-2S] cluster contacts are provided by Ser-110, Cys-142, Cys-202, and Arg-272.

Belongs to the radical SAM superfamily. Biotin synthase family. As to quaternary structure, homodimer. [4Fe-4S] cluster serves as cofactor. The cofactor is [2Fe-2S] cluster.

The catalysed reaction is (4R,5S)-dethiobiotin + (sulfur carrier)-SH + 2 reduced [2Fe-2S]-[ferredoxin] + 2 S-adenosyl-L-methionine = (sulfur carrier)-H + biotin + 2 5'-deoxyadenosine + 2 L-methionine + 2 oxidized [2Fe-2S]-[ferredoxin]. It participates in cofactor biosynthesis; biotin biosynthesis; biotin from 7,8-diaminononanoate: step 2/2. Functionally, catalyzes the conversion of dethiobiotin (DTB) to biotin by the insertion of a sulfur atom into dethiobiotin via a radical-based mechanism. In Heliobacterium modesticaldum (strain ATCC 51547 / Ice1), this protein is Biotin synthase.